A 176-amino-acid chain; its full sequence is Large ribosomal subunit protein uL6 (176 aa).

This sequence belongs to the universal ribosomal protein uL6 family. Part of the 50S ribosomal subunit.

In terms of biological role, this protein binds to the 23S rRNA, and is important in its secondary structure. It is located near the subunit interface in the base of the L7/L12 stalk, and near the tRNA binding site of the peptidyltransferase center. The protein is Large ribosomal subunit protein uL6 of Paraburkholderia phytofirmans (strain DSM 17436 / LMG 22146 / PsJN) (Burkholderia phytofirmans).